The primary structure comprises 188 residues: MSNALASAPLDAADYIKSHIRTVPDWPQPGVQFRDITPLLQEPKSLRVLIDLFVQRYIDAKLDYIAGLDARGFIIGPILAYELNLGFIPIRKAGKLPYKRVAQSYELEYGTATVEIHEDACKPGDRIVIIDDLIATGGTMMAGKILLERLGAVVVEGAAIIDLPELGGSKLLREGGLALYTVTGFDGH.

The protein belongs to the purine/pyrimidine phosphoribosyltransferase family. In terms of assembly, homodimer.

It localises to the cytoplasm. It carries out the reaction AMP + diphosphate = 5-phospho-alpha-D-ribose 1-diphosphate + adenine. It participates in purine metabolism; AMP biosynthesis via salvage pathway; AMP from adenine: step 1/1. Its function is as follows. Catalyzes a salvage reaction resulting in the formation of AMP, that is energically less costly than de novo synthesis. The protein is Adenine phosphoribosyltransferase of Paraburkholderia phytofirmans (strain DSM 17436 / LMG 22146 / PsJN) (Burkholderia phytofirmans).